A 151-amino-acid polypeptide reads, in one-letter code: Large ribosomal subunit protein bL17 (151 aa).

Belongs to the bacterial ribosomal protein bL17 family. In terms of assembly, part of the 50S ribosomal subunit. Contacts protein L32.

The protein is Large ribosomal subunit protein bL17 of Chlorobium limicola (strain DSM 245 / NBRC 103803 / 6330).